The chain runs to 263 residues: Glucosamine-6-phosphate deaminase (263 aa).

Asp-72 (proton acceptor; for enolization step) is an active-site residue. The For ring-opening step role is filled by Asp-141. His-143 functions as the Proton acceptor; for ring-opening step in the catalytic mechanism. The For ring-opening step role is filled by Glu-148.

It belongs to the glucosamine/galactosamine-6-phosphate isomerase family. NagB subfamily.

The enzyme catalyses alpha-D-glucosamine 6-phosphate + H2O = beta-D-fructose 6-phosphate + NH4(+). Its pathway is amino-sugar metabolism; N-acetylneuraminate degradation; D-fructose 6-phosphate from N-acetylneuraminate: step 5/5. Its activity is regulated as follows. Allosterically activated by N-acetylglucosamine 6-phosphate (GlcNAc6P). Its function is as follows. Catalyzes the reversible isomerization-deamination of glucosamine 6-phosphate (GlcN6P) to form fructose 6-phosphate (Fru6P) and ammonium ion. The chain is Glucosamine-6-phosphate deaminase from Porphyromonas gingivalis (strain ATCC BAA-308 / W83).